A 176-amino-acid chain; its full sequence is Peptide deformylase (176 aa).

C94 and H136 together coordinate Fe cation. E137 is an active-site residue. Residue H140 participates in Fe cation binding.

Belongs to the polypeptide deformylase family. The cofactor is Fe(2+).

It catalyses the reaction N-terminal N-formyl-L-methionyl-[peptide] + H2O = N-terminal L-methionyl-[peptide] + formate. Its function is as follows. Removes the formyl group from the N-terminal Met of newly synthesized proteins. Requires at least a dipeptide for an efficient rate of reaction. N-terminal L-methionine is a prerequisite for activity but the enzyme has broad specificity at other positions. The chain is Peptide deformylase from Bartonella henselae (strain ATCC 49882 / DSM 28221 / CCUG 30454 / Houston 1) (Rochalimaea henselae).